We begin with the raw amino-acid sequence, 565 residues long: MASTDTYNPTRDDFAAMLDESFAGGNLQESSVIKGKVVAIEKDMAVIDVGLKTEGRVPLREFAGPGRDNEIKVGDTVEVFLDRIENALGEAVLSRDKARREESWGKLEKAFQNNEKVFGVIFNQVKGGFTVDLDGAVAFLPRSQVDIRPIRDVAPLMNNSQPFQILKMDRRRGNIVVSRRTVLEETRAEQRQELVQNLEEGQVIDGVVKNITDYGAFVDLGGIDGLLHVTDIAWRRVNHPTEVLTIGQTVKVKIIKINHETHRISLGMKQLLDDPWQGIEAKYPLNARFTGRVTNITDYGAFVELEPGIEGLIHVSEMSWTKKNMHPGKIVSTSQEVEVQVLEVDSVKRRISLGLKQTMRNPWEVFVEKHPVGSTVEGEVKNKTEFGLFLGLDGDVDGMVHLSDLDWKLPGEQVIDNFKKGDMVKAVVLDVDVEKERISLGVKQLEGDPFAEPGDVKKGAVVTCEVLDVKESGIDVQIVGTDFNTFIKRSELARDRNDQRSDRFAVGEKVDARVIQFDKKARKVQVSIKALEVAEEKEAIAQYGSSDSGATLGDILGTALKQRDK.

S1 motif domains are found at residues 30 to 96 (SSVI…LSRD), 114 to 180 (NEKV…VSRR), 201 to 269 (GQVI…LGMK), 286 to 356 (NARF…LGLK), 373 to 443 (GSTV…LGVK), and 454 to 529 (GDVK…VSIK).

Belongs to the bacterial ribosomal protein bS1 family. Post-translationally, the initiator methionine may be removed.

In terms of biological role, binds mRNA; thus facilitating recognition of the initiation point. It is needed to translate mRNA with a short Shine-Dalgarno (SD) purine-rich sequence. This is Small ribosomal subunit protein bS1 (rpsA) from Rhodopseudomonas palustris (strain ATCC BAA-98 / CGA009).